A 167-amino-acid polypeptide reads, in one-letter code: MINVEIVRNYNKWREHKQINKSLIKKITQNILLRFDNFSKIKQFELSILLTNAAEILTLNKQFRNIEKATNVLSFPSNELNWQDLYSKLEFLGDSDYMHLGDIAFCYEVIYNESCEQHKTFENHFIHLLIHSILHLIGFDHQNDTEANIMENLEIEILSYFGIFPPY.

His-131, His-135, and His-141 together coordinate Zn(2+).

The protein belongs to the endoribonuclease YbeY family. Zn(2+) serves as cofactor.

It localises to the cytoplasm. Its function is as follows. Single strand-specific metallo-endoribonuclease involved in late-stage 70S ribosome quality control and in maturation of the 3' terminus of the 16S rRNA. This chain is Endoribonuclease YbeY, found in Rickettsia conorii (strain ATCC VR-613 / Malish 7).